Consider the following 2326-residue polypeptide: Telomere-associated protein RIF1 (2326 aa).

Disordered stretches follow at residues 381-410, 1105-1965, and 1993-2050; these read QGTPSRVPSNPNSANPPQKPGPYPFASPAT, YTQS…CITP, and VENK…DDSL. Residues 382–396 show a composition bias toward polar residues; that stretch reads GTPSRVPSNPNSANP. Composition is skewed to basic and acidic residues over residues 1112 to 1126 and 1150 to 1182; these read SLEKSPLENAKEDFK and CKVDNPLEDVKEKSAYHIEKNSNSEEESSRGDR. A compositionally biased stretch (low complexity) spans 1216 to 1225; sequence SAISCSSTSS. Composition is skewed to polar residues over residues 1233 to 1242 and 1252 to 1270; these read QPASRRQSFI and SRPFSPSALNSVSEVSQSA. Residues 1290-1299 show a composition bias toward basic and acidic residues; the sequence is KSGEESRKSS. Polar residues-rich tracts occupy residues 1318 to 1332 and 1341 to 1353; these read MEQQGNQQAKLVTNS and SFVSNSVENSPES. The span at 1376–1402 shows a compositional bias: basic and acidic residues; the sequence is PDIKKAEAVMAEIEKVRAFEMDSKENT. Residues 1403-1412 are compositionally biased toward polar residues; that stretch reads PPKTAVSSEQ. Basic and acidic residues-rich tracts occupy residues 1448 to 1480, 1489 to 1511, and 1519 to 1539; these read QDKEDGYQKKDKRKEDEKALQKKVPQTKEDASQ, ASEHAIKKESSLPERSAAEDLGS, and GADEEANRSAGKPEDTLKSDS. Positions 1564–1573 are enriched in polar residues; it reads SSQGLLSSIE. Over residues 1586–1595 the composition is skewed to basic residues; that stretch reads SLKKKSGKTK. Basic and acidic residues predominate over residues 1596–1609; it reads NKSDSLEGKRKDVQ. 2 stretches are compositionally biased toward polar residues: residues 1610–1640 and 1671–1683; these read PESQSHGVSSQVDESKNLSGMNESELSSEVS and RTSPSTQNVSVEQ. Over residues 1697 to 1712 the composition is skewed to basic and acidic residues; it reads RVSDEVLKGDENKCIE. The span at 1713-1745 shows a compositional bias: polar residues; it reads KQSSVEQHSSVQPENVQGANTSGSDLSSLQMQD. The segment covering 1776 to 1785 has biased composition (basic and acidic residues); it reads SKSEDPRELI. Polar residues predominate over residues 1795 to 1813; sequence AVSTAEVSGSSNLEESLSI. Basic and acidic residues-rich tracts occupy residues 1869-1884, 1908-1925, and 1932-1954; these read VEIKVKEEVDGNDRAE, SEEKAAVEKEEESQHGEM, and DGSKPETKQMDELEGNRDGKEEA. A compositionally biased stretch (polar residues) spans 2009 to 2036; the sequence is SFTSVNGSPSGVQARCTWSPSASPSTSI.

It belongs to the RIF1 family. As to quaternary structure, interacts with TP53BP1 (when phosphorylated by ATM).

It is found in the nucleus. Its subcellular location is the chromosome. The protein resides in the telomere. The protein localises to the cytoplasm. It localises to the cytoskeleton. It is found in the spindle. Key regulator of TP53BP1 that plays a key role in the repair of double-strand DNA breaks (DSBs) in response to DNA damage: acts by promoting non-homologous end joining (NHEJ)-mediated repair of DSBs. In response to DNA damage, interacts with ATM-phosphorylated TP53BP1, allowing recruitment to DNA DSBs. Once recruited to DSBs, RIF1 and TP53BP1 act by promoting NHEJ-mediated repair of DSBs. In the same time, RIF1 and TP53BP1 specifically counteract DSBs resection via homologous recombination (HR) during G1 phase. The sequence is that of Telomere-associated protein RIF1 from Gallus gallus (Chicken).